Reading from the N-terminus, the 555-residue chain is Meiotic mRNA stability protein kinase SSN3 (555 aa).

The region spanning Tyr-75–Phe-463 is the Protein kinase domain. ATP is bound at residue Ile-81–Val-89. Polar residues predominate over residues Thr-100–Leu-138. The segment at Thr-100–Ser-166 is disordered. Lys-183 contributes to the ATP binding site. The Proton acceptor role is filled by Asp-286.

Belongs to the protein kinase superfamily. CMGC Ser/Thr protein kinase family. CDC2/CDKX subfamily. As to quaternary structure, component of the SRB8-11 complex which consists of SRB8, SSN2/SRB9, SSN3/SRB10 and SSN8/SRB11. The SRB8-11 complex associates with the Mediator complex. The SSN3/SRB10 and SSN8/SRB11 kinase-cyclin pair also associate with the RNA polymerase II holoenzyme. Interacts with TUP1.

It localises to the nucleus. It catalyses the reaction L-seryl-[protein] + ATP = O-phospho-L-seryl-[protein] + ADP + H(+). The enzyme catalyses L-threonyl-[protein] + ATP = O-phospho-L-threonyl-[protein] + ADP + H(+). The catalysed reaction is [DNA-directed RNA polymerase] + ATP = phospho-[DNA-directed RNA polymerase] + ADP + H(+). Component of the SRB8-11 complex. The SRB8-11 complex is a regulatory module of the Mediator complex which is itself involved in regulation of basal and activated RNA polymerase II-dependent transcription. The SRB8-11 complex may be involved in the transcriptional repression of a subset of genes regulated by Mediator. It may inhibit the association of the Mediator complex with RNA polymerase II to form the holoenzyme complex. The SRB8-11 complex phosphorylates the C-terminal domain (CTD) of the largest subunit of RNA polymerase II RPB1 at serines 2 and 5. The SSN3/SRB10 and SSN8/SRB11 kinase-cyclin pair may also positively and negatively regulate numerous transcriptional activators in response to changes in nutritional and physiological conditions. Phosphorylates GCN4, promoting its ubiquitin-mediated degradation, and MSN2, promoting its nuclear exclusion. Phosphorylates STE12, thereby promoting its degradation and inhibition of filamentous growth. Phosphorylates GAL4, and this phosphorylation is required for efficient galactose-inducible transcription. Also phosphorylates BDF1 and the TAF2 subunit of the TFIID complex. The sequence is that of Meiotic mRNA stability protein kinase SSN3 (SSN3) from Saccharomyces cerevisiae (strain ATCC 204508 / S288c) (Baker's yeast).